A 264-amino-acid chain; its full sequence is MNQVTESAVQFDVITLFPEMFRALTDWGITSRAVKQGRFGLRTWNPRDFTTDNYRTVDDRPYGGGPGMVMLARPLEAAIDAAKAAQAEQGIASTRVVMMSPQGAPLTHDRAVRMAQEPGVVVLCGRYEAIDQRLLDRCVDEEISLGDFVLSGGELPAMAMMDAVVRLLPGVLNDSLSAVQDSFADGLLDCPHYTRPEEYDGVRVPDVLLGGHHAEIEKWRRQEALRNTLRKRPDLIVRARREKLLSRADEAWLANLAREAKDAS.

Residues glycine 125 and 145–150 (LGDFVL) contribute to the S-adenosyl-L-methionine site.

The protein belongs to the RNA methyltransferase TrmD family. As to quaternary structure, homodimer.

It is found in the cytoplasm. The enzyme catalyses guanosine(37) in tRNA + S-adenosyl-L-methionine = N(1)-methylguanosine(37) in tRNA + S-adenosyl-L-homocysteine + H(+). Functionally, specifically methylates guanosine-37 in various tRNAs. This Burkholderia cenocepacia (strain ATCC BAA-245 / DSM 16553 / LMG 16656 / NCTC 13227 / J2315 / CF5610) (Burkholderia cepacia (strain J2315)) protein is tRNA (guanine-N(1)-)-methyltransferase.